The chain runs to 254 residues: Thiazole synthase (254 aa).

K95 (schiff-base intermediate with DXP) is an active-site residue. 1-deoxy-D-xylulose 5-phosphate is bound by residues G156, 182-183 (AG), and 204-205 (NT).

This sequence belongs to the ThiG family. Homotetramer. Forms heterodimers with either ThiH or ThiS.

The protein localises to the cytoplasm. It catalyses the reaction [ThiS sulfur-carrier protein]-C-terminal-Gly-aminoethanethioate + 2-iminoacetate + 1-deoxy-D-xylulose 5-phosphate = [ThiS sulfur-carrier protein]-C-terminal Gly-Gly + 2-[(2R,5Z)-2-carboxy-4-methylthiazol-5(2H)-ylidene]ethyl phosphate + 2 H2O + H(+). Its pathway is cofactor biosynthesis; thiamine diphosphate biosynthesis. Its function is as follows. Catalyzes the rearrangement of 1-deoxy-D-xylulose 5-phosphate (DXP) to produce the thiazole phosphate moiety of thiamine. Sulfur is provided by the thiocarboxylate moiety of the carrier protein ThiS. In vitro, sulfur can be provided by H(2)S. This chain is Thiazole synthase, found in Shewanella baltica (strain OS195).